Reading from the N-terminus, the 93-residue chain is U12-lycotoxin-Ls1b (93 aa).

The signal sequence occupies residues M1–S18. Residues E19–R38 constitute a propeptide that is removed on maturation.

The protein belongs to the neurotoxin 31 family. In terms of processing, contains 5 disulfide bonds. As to expression, expressed by the venom gland.

It localises to the secreted. The protein is U12-lycotoxin-Ls1b of Lycosa singoriensis (Wolf spider).